We begin with the raw amino-acid sequence, 416 residues long: Formyl-CoA:oxalate CoA-transferase (416 aa).

CoA is bound by residues Gln17–Ser18, Arg38, Leu72–Lys75, Asn96–His98, His104, and Lys137–Glu140. The active-site Nucleophile is the Asp169. Gly248–Gln250 is a binding site for substrate. Residue Gln273–Gln275 participates in CoA binding.

Belongs to the CoA-transferase III family. Frc subfamily. As to quaternary structure, homodimer.

It carries out the reaction formyl-CoA + oxalate = oxalyl-CoA + formate. It functions in the pathway metabolic intermediate degradation; oxalate degradation; CO(2) and formate from oxalate: step 1/2. Its function is as follows. Involved in the catabolism of oxalate and in the adapatation to low pH via the induction of the oxalate-dependent acid tolerance response (ATR). Catalyzes the transfer of the CoA moiety from formyl-CoA to oxalate. The chain is Formyl-CoA:oxalate CoA-transferase from Escherichia coli O6:H1 (strain CFT073 / ATCC 700928 / UPEC).